A 427-amino-acid polypeptide reads, in one-letter code: Acetyl-CoA acetyltransferase, mitochondrial (427 aa).

The transit peptide at 1 to 33 directs the protein to the mitochondrion; sequence MAVLAALLRGGARSRSPLLRRLVQEIRYVERSY. Lysine 66 bears the N6-acetyllysine; alternate mark. Position 66 is an N6-succinyllysine; alternate (lysine 66). Lysine 78 carries the post-translational modification N6-succinyllysine. Catalysis depends on cysteine 126, which acts as the Acyl-thioester intermediate. 4 positions are modified to N6-acetyllysine; alternate: lysine 174, lysine 181, lysine 190, and lysine 202. Residues lysine 174, lysine 181, lysine 190, and lysine 202 each carry the N6-succinyllysine; alternate modification. Tyrosine 219 lines the CoA pocket. Tyrosine 219 provides a ligand contact to K(+). 2 positions are modified to N6-acetyllysine; alternate: lysine 223 and lysine 230. An N6-succinyllysine; alternate mark is found at lysine 223 and lysine 230. An N6-succinyllysine modification is found at lysine 243. An N6-acetyllysine mark is found at lysine 251 and lysine 257. CoA contacts are provided by residues 258 to 260 and lysine 263; that span reads RVD. Residue lysine 263 is modified to N6-acetyllysine; alternate. The residue at position 263 (lysine 263) is an N6-succinyllysine; alternate. N6-succinyllysine occurs at positions 266 and 268. Lysine 273 is subject to N6-acetyllysine. K(+) contacts are provided by alanine 280, alanine 281, and alanine 283. Serine 284 is a CoA binding site. Lysine 338 bears the N6-acetyllysine mark. Position 381 (valine 381) interacts with K(+). Cysteine 413 acts as the Proton donor/acceptor in catalysis.

The protein belongs to the thiolase-like superfamily. Thiolase family. Homotetramer. Post-translationally, succinylation at Lys-268, adjacent to a coenzyme A binding site. Desuccinylated by SIRT5.

It is found in the mitochondrion. It catalyses the reaction 2 acetyl-CoA = acetoacetyl-CoA + CoA. The enzyme catalyses propanoyl-CoA + acetyl-CoA = 2-methyl-3-oxobutanoyl-CoA + CoA. It functions in the pathway lipid metabolism; fatty acid beta-oxidation. With respect to regulation, activated by potassium ions, but not sodium ions. In terms of biological role, this is one of the enzymes that catalyzes the last step of the mitochondrial beta-oxidation pathway, an aerobic process breaking down fatty acids into acetyl-CoA. Using free coenzyme A/CoA, catalyzes the thiolytic cleavage of medium- to long-chain 3-oxoacyl-CoAs into acetyl-CoA and a fatty acyl-CoA shortened by two carbon atoms. The activity of the enzyme is reversible and it can also catalyze the condensation of two acetyl-CoA molecules into acetoacetyl-CoA. Thereby, it plays a major role in ketone body metabolism. The chain is Acetyl-CoA acetyltransferase, mitochondrial (ACAT1) from Macaca fascicularis (Crab-eating macaque).